The primary structure comprises 209 residues: Ribosomal RNA large subunit methyltransferase E (209 aa).

Positions 63, 65, 83, 99, and 124 each coordinate S-adenosyl-L-methionine. Lysine 164 functions as the Proton acceptor in the catalytic mechanism.

The protein belongs to the class I-like SAM-binding methyltransferase superfamily. RNA methyltransferase RlmE family.

Its subcellular location is the cytoplasm. The enzyme catalyses uridine(2552) in 23S rRNA + S-adenosyl-L-methionine = 2'-O-methyluridine(2552) in 23S rRNA + S-adenosyl-L-homocysteine + H(+). In terms of biological role, specifically methylates the uridine in position 2552 of 23S rRNA at the 2'-O position of the ribose in the fully assembled 50S ribosomal subunit. The chain is Ribosomal RNA large subunit methyltransferase E from Shewanella halifaxensis (strain HAW-EB4).